A 205-amino-acid polypeptide reads, in one-letter code: Holliday junction branch migration complex subunit RuvA (205 aa).

The segment at 1–64 (MIGKLKGLID…EDQIKLFGFR (64 aa)) is domain I. The segment at 65–143 (SDLEREWFRL…AFASVDPAVV (79 aa)) is domain II. The tract at residues 144 to 153 (ALSGALDERS) is flexible linker. Residues 153 to 205 (SAPRPVTDAISALVNLGYGQPQAAAAIASASRSAGEGAETAQLIKLGLKELSK) form a domain III region.

Belongs to the RuvA family. In terms of assembly, homotetramer. Forms an RuvA(8)-RuvB(12)-Holliday junction (HJ) complex. HJ DNA is sandwiched between 2 RuvA tetramers; dsDNA enters through RuvA and exits via RuvB. An RuvB hexamer assembles on each DNA strand where it exits the tetramer. Each RuvB hexamer is contacted by two RuvA subunits (via domain III) on 2 adjacent RuvB subunits; this complex drives branch migration. In the full resolvosome a probable DNA-RuvA(4)-RuvB(12)-RuvC(2) complex forms which resolves the HJ.

It is found in the cytoplasm. Functionally, the RuvA-RuvB-RuvC complex processes Holliday junction (HJ) DNA during genetic recombination and DNA repair, while the RuvA-RuvB complex plays an important role in the rescue of blocked DNA replication forks via replication fork reversal (RFR). RuvA specifically binds to HJ cruciform DNA, conferring on it an open structure. The RuvB hexamer acts as an ATP-dependent pump, pulling dsDNA into and through the RuvAB complex. HJ branch migration allows RuvC to scan DNA until it finds its consensus sequence, where it cleaves and resolves the cruciform DNA. This is Holliday junction branch migration complex subunit RuvA from Rhodopseudomonas palustris (strain BisB18).